Consider the following 469-residue polypeptide: Probable indole-3-acetic acid-amido synthetase GH3.13 (469 aa).

Positions 1-26 (MTSTSSENAPDHDHDHDASSPAPATA) are disordered. Over residues 9-18 (APDHDHDHDA) the composition is skewed to basic and acidic residues.

The protein belongs to the IAA-amido conjugating enzyme family.

Its function is as follows. May catalyze the synthesis of indole-3-acetic acid (IAA)-amino acid conjugates, providing a mechanism for the plant to cope with the presence of excess auxin. The sequence is that of Probable indole-3-acetic acid-amido synthetase GH3.13 (GH3.13) from Oryza sativa subsp. japonica (Rice).